Here is a 452-residue protein sequence, read N- to C-terminus: uncharacterized protein (452 aa).

It is found in the cytoplasm. The protein localises to the nucleus. This is an uncharacterized protein from Schizosaccharomyces pombe (strain 972 / ATCC 24843) (Fission yeast).